The sequence spans 341 residues: Heat-shock protein cognate (HSC) co-chaperone sgt12 (341 aa).

The segment at 86–123 (PSKEPASAGAQAQSTEAQQPKAGAPTPESDKLKSEGNA) is disordered. TPR repeat units follow at residues 114 to 147 (SDKL…APAN), 148 to 181 (PIYL…DPKY), and 182 to 215 (SKAW…EGNG). Residues 232 to 280 (EEANRGAEPPADDVDDAAGASRGAGGMPDLSSLASMLGGRGGGGGGMPD) are disordered. Positions 269 to 278 (GGRGGGGGGM) are enriched in gly residues.

Belongs to the SGT family. Forms homodimers. Component of the get4/get5/sgt2 sorting complex. Dimers of sgt2 bind directly a single get5. Binds HSC family members ssa1, sse1, hsp104 and hsc82 via its TPR domain.

It localises to the cytoplasm. Functionally, heat-shock protein cognate (HSC) co-chaperone that preferentially binds endoplasmic reticulum-destined tail-anchored (TA) proteins and directs them to the GET (guided entry of TA proteins) pathway via get4 and get5. Get4 and get5 form an obligate complex that catalyzes the transfer of tail-anchored proteins destined to the endoplasmic reticulum from sgt2 to the cytosolic targeting factor which then targets the TA protein to the ER membrane via get1/get2. This Aspergillus fumigatus (strain ATCC MYA-4609 / CBS 101355 / FGSC A1100 / Af293) (Neosartorya fumigata) protein is Heat-shock protein cognate (HSC) co-chaperone sgt12.